Consider the following 90-residue polypeptide: MKPMRQKPGRGQGNKSISNALASKKKVSKNQAVFFDYRDERKLKRFINDQGKMIPRRITGLSAKEQNLLTHSVKWARFLAVIPYVSDEYK.

The segment at methionine 1–lysine 24 is disordered.

Belongs to the bacterial ribosomal protein bS18 family. As to quaternary structure, part of the 30S ribosomal subunit. Forms a tight heterodimer with protein bS6.

Its function is as follows. Binds as a heterodimer with protein bS6 to the central domain of the 16S rRNA, where it helps stabilize the platform of the 30S subunit. In Chlorobium phaeovibrioides (strain DSM 265 / 1930) (Prosthecochloris vibrioformis (strain DSM 265)), this protein is Small ribosomal subunit protein bS18.